We begin with the raw amino-acid sequence, 230 residues long: Sugar fermentation stimulation protein homolog (230 aa).

It belongs to the SfsA family.

The sequence is that of Sugar fermentation stimulation protein homolog from Pelobacter propionicus (strain DSM 2379 / NBRC 103807 / OttBd1).